We begin with the raw amino-acid sequence, 328 residues long: Tetraacyldisaccharide 4'-kinase (328 aa).

Residue 55–62 participates in ATP binding; that stretch reads TAGGNGKT.

This sequence belongs to the LpxK family.

It catalyses the reaction a lipid A disaccharide + ATP = a lipid IVA + ADP + H(+). It participates in glycolipid biosynthesis; lipid IV(A) biosynthesis; lipid IV(A) from (3R)-3-hydroxytetradecanoyl-[acyl-carrier-protein] and UDP-N-acetyl-alpha-D-glucosamine: step 6/6. Functionally, transfers the gamma-phosphate of ATP to the 4'-position of a tetraacyldisaccharide 1-phosphate intermediate (termed DS-1-P) to form tetraacyldisaccharide 1,4'-bis-phosphate (lipid IVA). In Escherichia coli O45:K1 (strain S88 / ExPEC), this protein is Tetraacyldisaccharide 4'-kinase.